Reading from the N-terminus, the 671-residue chain is Phospholipid:diacylglycerol acyltransferase 1 (671 aa).

A disordered region spans residues 1-46 (MPLIHRKKPTEKPSTPPSEEVVHDEDSQKKPHESSKSHHKKSNGGG). Topologically, residues 1–54 (MPLIHRKKPTEKPSTPPSEEVVHDEDSQKKPHESSKSHHKKSNGGGKWSCIDSC) are cytoplasmic. The segment covering 20-36 (EVVHDEDSQKKPHESSK) has biased composition (basic and acidic residues). A helical membrane pass occupies residues 55–75 (CWFIGCVCVTWWFLLFLYNAM). Topologically, residues 76 to 671 (PASFPQYVTE…EWSERIDLKL (596 aa)) are lumenal. Asn161 carries an N-linked (GlcNAc...) asparagine glycan. Ser254 (acyl-ester intermediate) is an active-site residue. N-linked (GlcNAc...) asparagine glycosylation is found at Asn381 and Asn434. Residues Asp573 and His626 each act as charge relay system in the active site. N-linked (GlcNAc...) asparagine glycosylation occurs at Asn647.

It belongs to the AB hydrolase superfamily. Lipase family. In terms of tissue distribution, ubiquitous. Highest expression in young developing seeds.

It localises to the membrane. The enzyme catalyses a glycerophospholipid + a 1,2-diacyl-sn-glycerol = a monoacylglycerophospholipid + a triacyl-sn-glycerol. The protein operates within glycerolipid metabolism; triacylglycerol biosynthesis. In terms of biological role, triacylglycerol formation by an acyl-CoA independent pathway. The enzyme preferentially transfers acyl groups from the sn-2 position of a phospholipid to diacylglycerol, thus forming an sn-1-lysophospholipid. Involved in epoxy and hydroxy fatty acid accumulation in seeds. Has complementary functions with DAG1 that are essential for triacylglycerol synthesis and normal development of both seeds and pollen. The sequence is that of Phospholipid:diacylglycerol acyltransferase 1 (PDAT1) from Arabidopsis thaliana (Mouse-ear cress).